Here is a 227-residue protein sequence, read N- to C-terminus: Cytochrome c oxidase subunit 2 (227 aa).

At 1 to 14 the chain is on the mitochondrial intermembrane side; sequence MAYPMQLGFQDATS. The helical transmembrane segment at 15 to 45 threads the bilayer; it reads PIMEELLHFHDHTLMIVFLISSLVLYIISLM. The Mitochondrial matrix segment spans residues 46-59; the sequence is LTTKLTHTSTMDAQ. A helical membrane pass occupies residues 60–87; it reads EVETIWTILPAIILIMIALPSLRILYMM. The Mitochondrial intermembrane portion of the chain corresponds to 88 to 227; sequence DEINNPSLTV…YFEKWSASML (140 aa). Cu cation-binding residues include C196, E198, C200, H204, and M207. Residue E198 coordinates Mg(2+). Position 218 is a phosphotyrosine (Y218).

This sequence belongs to the cytochrome c oxidase subunit 2 family. In terms of assembly, component of the cytochrome c oxidase (complex IV, CIV), a multisubunit enzyme composed of 14 subunits. The complex is composed of a catalytic core of 3 subunits MT-CO1, MT-CO2 and MT-CO3, encoded in the mitochondrial DNA, and 11 supernumerary subunits COX4I, COX5A, COX5B, COX6A, COX6B, COX6C, COX7A, COX7B, COX7C, COX8 and NDUFA4, which are encoded in the nuclear genome. The complex exists as a monomer or a dimer and forms supercomplexes (SCs) in the inner mitochondrial membrane with NADH-ubiquinone oxidoreductase (complex I, CI) and ubiquinol-cytochrome c oxidoreductase (cytochrome b-c1 complex, complex III, CIII), resulting in different assemblies (supercomplex SCI(1)III(2)IV(1) and megacomplex MCI(2)III(2)IV(2)). Found in a complex with TMEM177, COA6, COX18, COX20, SCO1 and SCO2. Interacts with TMEM177 in a COX20-dependent manner. Interacts with COX20. Interacts with COX16. The cofactor is Cu cation.

The protein localises to the mitochondrion inner membrane. The enzyme catalyses 4 Fe(II)-[cytochrome c] + O2 + 8 H(+)(in) = 4 Fe(III)-[cytochrome c] + 2 H2O + 4 H(+)(out). In terms of biological role, component of the cytochrome c oxidase, the last enzyme in the mitochondrial electron transport chain which drives oxidative phosphorylation. The respiratory chain contains 3 multisubunit complexes succinate dehydrogenase (complex II, CII), ubiquinol-cytochrome c oxidoreductase (cytochrome b-c1 complex, complex III, CIII) and cytochrome c oxidase (complex IV, CIV), that cooperate to transfer electrons derived from NADH and succinate to molecular oxygen, creating an electrochemical gradient over the inner membrane that drives transmembrane transport and the ATP synthase. Cytochrome c oxidase is the component of the respiratory chain that catalyzes the reduction of oxygen to water. Electrons originating from reduced cytochrome c in the intermembrane space (IMS) are transferred via the dinuclear copper A center (CU(A)) of subunit 2 and heme A of subunit 1 to the active site in subunit 1, a binuclear center (BNC) formed by heme A3 and copper B (CU(B)). The BNC reduces molecular oxygen to 2 water molecules using 4 electrons from cytochrome c in the IMS and 4 protons from the mitochondrial matrix. The sequence is that of Cytochrome c oxidase subunit 2 (MT-CO2) from Ovis aries (Sheep).